A 238-amino-acid chain; its full sequence is B-box zinc finger protein 25 (238 aa).

8 residues coordinate Zn(2+): Cys-5, Cys-8, Cys-28, His-33, Cys-57, Cys-60, Cys-80, and His-85. A B box-type 1; atypical zinc finger spans residues 5-47 (CDVCEKAPATLICCADEAALCAKCDVEVHAANKLASKHQRLFL). The B box-type 2; atypical zinc finger occupies 57-99 (CDICLEKAAFIFCVEDRALLCRDCDEATHAPNTRSANHQRFLA). The segment at 115-139 (VEKNHFDPSNQQSLSKPPTQQPAAP) is disordered. Over residues 121–137 (DPSNQQSLSKPPTQQPA) the composition is skewed to polar residues. Residues 226 to 238 (DDEEEHFLVPDLG) form an interaction with COP1 region.

In terms of assembly, interacts with COP1 WD40 domain. Interacts with HY5 and HYH. COP1-mediated ubiquitination and subsequent proteasomal degradation of BBX25/STH occurs in the dark.

The protein localises to the nucleus. Functionally, acts as a negative regulator of seedling photomorphogenesis. BBX25/STH and BBX24/STO function as transcriptional corepressors of HY5 activity, leading to the down-regulation of BBX22 expression. BBX25/STH acts additively with BBX24/STO during de-etiolation and the hypocotyl shade avoidance response. This chain is B-box zinc finger protein 25, found in Arabidopsis thaliana (Mouse-ear cress).